The chain runs to 409 residues: 5-aminolevulinate synthase (409 aa).

Residues Arg21 and Ser136 each coordinate substrate. Ser188, His216, and Thr244 together coordinate pyridoxal 5'-phosphate. Residue Lys247 is part of the active site. Lys247 carries the N6-(pyridoxal phosphate)lysine modification. Residues Thr276 and Thr277 each contribute to the pyridoxal 5'-phosphate site. Thr362 lines the substrate pocket.

Belongs to the class-II pyridoxal-phosphate-dependent aminotransferase family. As to quaternary structure, homodimer. The cofactor is pyridoxal 5'-phosphate.

It catalyses the reaction succinyl-CoA + glycine + H(+) = 5-aminolevulinate + CO2 + CoA. Its pathway is porphyrin-containing compound metabolism; protoporphyrin-IX biosynthesis; 5-aminolevulinate from glycine: step 1/1. In Bradyrhizobium diazoefficiens (strain JCM 10833 / BCRC 13528 / IAM 13628 / NBRC 14792 / USDA 110), this protein is 5-aminolevulinate synthase (hemA).